The sequence spans 66 residues: Cell division protein ZapB (66 aa).

Residues 3–59 (LELLSQLETKIQATLENIELLKMELEEEKQKSTQLAEKNQKLQQDLNSWSDKVNGLV) are a coiled coil.

This sequence belongs to the ZapB family. As to quaternary structure, homodimer. The ends of the coiled-coil dimer bind to each other, forming polymers. Interacts with FtsZ.

The protein localises to the cytoplasm. Functionally, non-essential, abundant cell division factor that is required for proper Z-ring formation. It is recruited early to the divisome by direct interaction with FtsZ, stimulating Z-ring assembly and thereby promoting cell division earlier in the cell cycle. Its recruitment to the Z-ring requires functional FtsA or ZipA. The sequence is that of Cell division protein ZapB from Shewanella denitrificans (strain OS217 / ATCC BAA-1090 / DSM 15013).